Here is a 1322-residue protein sequence, read N- to C-terminus: MMEIQMDEGGGVVVYQDDYCSGSVMSERVSGLAGSIYREFERLIHCYDEEVVKELMPLVVNVLENLDSVLSENQEHEVELELLREDNEQLLTQYEREKALRKQAEEKFIEFEDALEQEKKELQIQVEHYEFQTRQLELKAKNYADQISRLEERESEMKKEYNALHQRHTEMIQTYVEHIERSKMQQVGGGGQTESSLPGRSRKERPTSLNVFPLADGMVRAQMGGKLVPAGDHWHLSDLGQLQSSSSYQCPNDEMSESGQSSAAATPSTTGTKSNTPTSSVPSAAVTPLNESLQPLGDYGSVTKNNKRAREKRNSRNMEVQVTQEMRNVSIGMGSSDEWSDVQDIIDSTPELDVCPETRLDRTGSSPTQGIVNKAFGINTDSLYHELSTAGSEVIGDVDEGADLLGEFSGMGKEVGNLLLENSQLLETKNALNVVKNDLIAKVDQLSGEQEVLKGELEAAKQAKVKLENRIKELEEELKRVKSEAVTARREPREEVEDDKIPMAQRRRFTRVEMARVLMERNQYKERLMELQEAVRWTEMIRASREHPSVQEKKKSTIWQFFSRLFSSSSSPPPAKRSYPSVNIHYKSPTTAGFSQRRNHALCQISAGSRPLEFFPDDDCTSSARREQKREQYRQVREHVRNDDGRLQACGWSLPAKYKQLSPNGGQEDTRMKNVPVPVYCRPLVEKDPSTKLWCAAGVNLSGWKPNEEDSSNGPKPAPGRDPLTCDREGEGEPKSTHPSPEKKKAKEVPEADATSSRVWILTSTLTTSKVVIIDANQPGTVVDQFTVCNAHVLCISSIPAASDSDYPPGDMFLDSDVNPEDSGADGVLAGITLVGCATRCNVPRSNCSSRGDTPVLDKGQGDVAATANGKVNPSQSTEEATEATEVPDPGPSESEATTVRPGPLTEHVFTDPAPTQSSSTQPASENGSESDGSIVQPQVEPSGESSATTSSAAPTMWLGAQNGWLYVHSAVANWKKCLHSIKLKDSVLSLVHVKGRVLVALADGTLAIFHRGEDGQWDLSNYHLMDLGHPHHSIRCMAVVDDRVWCGYKNKVHVIQPKTMQIEKSFDAHPRRESQVRQLAWIGDGVWVSIRLDSTLRLYHAHTHQHLQDVDIEPYVSKMLGTGKLGFSFVRITALLIAGNRLWVGTGNGVVISIPLTETVVLHRGQLLGLRANKTSPTSGEGTRPGGIIHVYGDDSSDKTASSFIPYCSMAQAQLCFHGHRDAVKFFVSVPGNVLATLNGSVLDSPSEGPGPAAPAADAEGQKLKNALVLSGGEGYIDFRIGDGEDDETEEGTGDVNQTKPSLSKAERSHIIVWQVSYTPE.

The RH1 domain maps to 12-100 (VVVYQDDYCS…LTQYEREKAL (89 aa)). The kinesin-binding domain (KBD); essential for its function in axon elongation stretch occupies residues 50 to 80 (EVVKELMPLVVNVLENLDSVLSENQEHEVEL). Residues 66–167 (LDSVLSENQE…KKEYNALHQR (102 aa)) adopt a coiled-coil conformation. 2 disordered regions span residues 183-211 (KMQQ…SLNV) and 245-317 (SSSY…NSRN). The segment at 210–226 (NVFPLADGMVRAQMGGK) is JNK-binding domain (JBD); essential for its function in axon elongation. Low complexity predominate over residues 261-270 (SSAAATPSTT). Residues threonine 266, threonine 276, and threonine 287 each carry the phosphothreonine modification. Residues 271–282 (GTKSNTPTSSVP) are compositionally biased toward polar residues. The segment covering 305 to 315 (NNKRAREKRNS) has biased composition (basic residues). A phosphoserine mark is found at serine 315, serine 365, and serine 366. The tract at residues 424–459 (QLLETKNALNVVKNDLIAKVDQLSGEQEVLKGELEA) is leucine zipper-like domain (LZ); essential for its function in axon elongation. A coiled-coil region spans residues 443 to 534 (VDQLSGEQEV…KERLMELQEA (92 aa)). Residues 459–515 (AAKQAKVKLENRIKELEEELKRVKSEAVTARREPREEVEDDKIPMAQRRRFTRVEMA) form an interaction with NTRK2 region. The RH2 domain maps to 506 to 580 (RRRFTRVEMA…SPPPAKRSYP (75 aa)). Residues serine 588 and serine 662 each carry the phosphoserine modification. 3 disordered regions span residues 704-754 (WKPN…EADA), 844-952 (PRSN…TTSS), and 1281-1307 (RIGD…LSKA). Basic and acidic residues predominate over residues 724–750 (LTCDREGEGEPKSTHPSPEKKKAKEVP). Residues 914–937 (APTQSSSTQPASENGSESDGSIVQ) show a composition bias toward polar residues. Residues 941–952 (EPSGESSATTSS) show a composition bias toward low complexity. Residues 1285 to 1294 (GEDDETEEGT) are compositionally biased toward acidic residues.

Belongs to the JIP scaffold family. Forms homo- or heterooligomeric complexes. The central region of MAPK8IP3 interacts with the C-terminal of MAPK8IP2 but not MAPK8IP1. Binds specific components of the JNK signaling pathway namely MAPK8/JNK1, MAPK9/JNK2 and MAPK10/JNK3 to the N-terminal region, MAP2K4/MKK4 and MAP2K7/MKK7 to the central region and MAP3K11 to the C-terminal region. Binds the TPR motif-containing C-terminal of kinesin light chain, KLC1. Pre-assembled MAPK8IP1 scaffolding complexes are then transported as a cargo of kinesin, to the required subcellular location. Interacts with ROCK1 and this interaction is enhanced by ultraviolet-B (UVB) radiation. Interacts with SH3RF2. Interacts with NTRK3/TRKC. Interacts with NTRK2/TRKB. Post-translationally, phosphorylation by ROCK1 is crucial for the recruitment of JNK.

The protein resides in the cytoplasm. It is found in the golgi apparatus. Its subcellular location is the cytoplasmic vesicle. It localises to the cell projection. The protein localises to the growth cone. The protein resides in the axon. It is found in the dendrite. Its subcellular location is the perinuclear region. The JNK-interacting protein (JIP) group of scaffold proteins selectively mediates JNK signaling by aggregating specific components of the MAPK cascade to form a functional JNK signaling module. May function as a regulator of vesicle transport, through interactions with the JNK-signaling components and motor proteins. Promotes neuronal axon elongation in a kinesin- and JNK-dependent manner. Activates cofilin at axon tips via local activation of JNK, thereby regulating filopodial dynamics and enhancing axon elongation. Its binding to kinesin heavy chains (KHC), promotes kinesin-1 motility along microtubules and is essential for axon elongation and regeneration. Regulates cortical neuronal migration by mediating NTRK2/TRKB anterograde axonal transport during brain development. Acts as an adapter that bridges the interaction between NTRK2/TRKB and KLC1 and drives NTRK2/TRKB axonal but not dendritic anterograde transport, which is essential for subsequent BDNF-triggered signaling and filopodia formation. The chain is C-Jun-amino-terminal kinase-interacting protein 3 (Mapk8ip3) from Rattus norvegicus (Rat).